The following is a 331-amino-acid chain: ESX-3 secretion system protein EccE3 (331 aa).

2 helical membrane passes run 11-31 and 37-57; these read GRVT…PWQS and LLGV…GLYF.

The protein belongs to the EccE family. Part of the ESX-3 / type VII secretion system (T7SS), which is composed of cytosolic and membrane components. The ESX-3 membrane complex is composed of EccB3, EccC3, EccD3 and EccE3.

The protein localises to the cell inner membrane. Functionally, part of the ESX-3 specialized secretion system, which is important for iron and zinc uptake or homeostasis. The polypeptide is ESX-3 secretion system protein EccE3 (Mycobacterium tuberculosis (strain CDC 1551 / Oshkosh)).